A 156-amino-acid polypeptide reads, in one-letter code: Arginine repressor (156 aa).

It belongs to the ArgR family.

The protein resides in the cytoplasm. Its pathway is amino-acid biosynthesis; L-arginine biosynthesis [regulation]. Functionally, regulates arginine biosynthesis genes. The sequence is that of Arginine repressor from Shewanella oneidensis (strain ATCC 700550 / JCM 31522 / CIP 106686 / LMG 19005 / NCIMB 14063 / MR-1).